A 636-amino-acid chain; its full sequence is Protein cueball (636 aa).

A signal peptide spans 1-27 (MKLCTSQQFGVAVLFIVLNICSPLADA). Topologically, residues 28-517 (SPIAWDFAVT…ADGPSSLRSG (490 aa)) are extracellular. N-linked (GlcNAc...) asparagine glycans are attached at residues asparagine 83 and asparagine 109. LDL-receptor class B repeat units follow at residues 122 to 169 (RNLF…DICR), 170 to 214 (RQLY…DQLS), and 215 to 260 (DRIF…TEDT). Asparagine 190 carries an N-linked (GlcNAc...) asparagine glycan. N-linked (GlcNAc...) asparagine glycosylation is found at asparagine 285 and asparagine 339. EGF-like domains follow at residues 350–384 (RMDA…ARCE) and 419–456 (EYYK…TRCE). Cystine bridges form between cysteine 359/cysteine 372, cysteine 374/cysteine 383, cysteine 423/cysteine 433, cysteine 427/cysteine 444, and cysteine 446/cysteine 455. N-linked (GlcNAc...) asparagine glycosylation is found at asparagine 449, asparagine 458, and asparagine 493. Residues 518-538 (SVIIVLVVGIVSSLALVAVIV) form a helical membrane-spanning segment. The Cytoplasmic segment spans residues 539-636 (HGLRLIYKPK…IHNMEDDLLT (98 aa)).

Belongs to the cueball family.

Its subcellular location is the cell membrane. Its function is as follows. Has a role in spermatogenesis and oogenesis. This chain is Protein cueball, found in Drosophila virilis (Fruit fly).